Consider the following 150-residue polypeptide: Avidin-related protein 6 (150 aa).

The first 24 residues, 1-24 (MVHATSPLLLLLLLSLALVAPGLS), serve as a signal peptide directing secretion. Residues 26-147 (RKCSLTGEWD…GYNNFTRQRT (122 aa)) enclose the Avidin-like domain. Residues Cys-28 and Cys-105 are joined by a disulfide bond. Residues Asn-36 and Ser-40 each coordinate biotin. The N-linked (GlcNAc...) asparagine glycan is linked to Asn-54. Residues Tyr-57, Thr-59, and Asp-63 each contribute to the biotin site. Residue Asn-93 is glycosylated (N-linked (GlcNAc...) asparagine). Residues Ser-95, Ser-99, and Asn-140 each contribute to the biotin site. Residue Asn-141 is glycosylated (N-linked (GlcNAc...) asparagine).

Belongs to the avidin/streptavidin family. As to quaternary structure, homotetramer. Post-translationally, glycosylated.

Its subcellular location is the secreted. Functionally, forms a strong non-covalent specific complex with biotin. The chain is Avidin-related protein 6 (AVR6) from Gallus gallus (Chicken).